A 105-amino-acid chain; its full sequence is Large ribosomal subunit protein uL24 (105 aa).

Belongs to the universal ribosomal protein uL24 family. Part of the 50S ribosomal subunit.

One of two assembly initiator proteins, it binds directly to the 5'-end of the 23S rRNA, where it nucleates assembly of the 50S subunit. Its function is as follows. One of the proteins that surrounds the polypeptide exit tunnel on the outside of the subunit. The polypeptide is Large ribosomal subunit protein uL24 (Xanthobacter autotrophicus (strain ATCC BAA-1158 / Py2)).